The sequence spans 277 residues: MKISMQKADFWKKAAISLLVFTMFFTLMMSETVFAAGLNKDQKRRAEQLTSIFENGTTEIQYGYVERLDDGRGYTCGRAGFTTATGDALEVVEVYTKAVPNNKLKKYLPELRRLAKEESDDTSNLKGFASAWKSLANDKEFRAAQDKVNDHLYYQPAMKRSDNAGLKTALARAVMYDTVIQHGDGDDPDSFYALIKRTNKKAGGSPKDGIDEKKWLNKFLDVRYDDLMNPANHDTRDEWRESVARVDVLRSIAKENNYNLNGPIHVRSNEYGNFVIK.

The signal sequence occupies residues M1–A35. The active-site Proton donor is E54. D70 serves as the catalytic Nucleophile.

The protein belongs to the glycosyl hydrolase 46 family.

It localises to the secreted. The enzyme catalyses Endohydrolysis of beta-(1-&gt;4)-linkages between D-glucosamine residues in a partly acetylated chitosan.. Functionally, aids in the defense against invading fungal pathogens by degrading their cell wall chitosan. The polypeptide is Chitosanase (csn) (Bacillus subtilis (strain 168)).